The chain runs to 198 residues: Outer-membrane lipoprotein carrier protein (198 aa).

An N-terminal signal peptide occupies residues 1-17 (MKKFLFSLCLLSSTVLA).

The protein belongs to the LolA family. Monomer.

Its subcellular location is the periplasm. In terms of biological role, participates in the translocation of lipoproteins from the inner membrane to the outer membrane. Only forms a complex with a lipoprotein if the residue after the N-terminal Cys is not an aspartate (The Asp acts as a targeting signal to indicate that the lipoprotein should stay in the inner membrane). This chain is Outer-membrane lipoprotein carrier protein, found in Aliivibrio fischeri (strain ATCC 700601 / ES114) (Vibrio fischeri).